The chain runs to 219 residues: Probable GTP-binding protein EngB (219 aa).

In terms of domain architecture, EngB-type G spans 31–205; the sequence is VGVEIAFAGR…LAILNEWCHP (175 aa). GTP contacts are provided by residues 39 to 46, 66 to 70, 84 to 87, 151 to 154, and 184 to 186; these read GRSNAGKS, GRTQL, DLPG, TKSD, and FSS. Mg(2+)-binding residues include Ser46 and Thr68.

The protein belongs to the TRAFAC class TrmE-Era-EngA-EngB-Septin-like GTPase superfamily. EngB GTPase family. Mg(2+) is required as a cofactor.

Its function is as follows. Necessary for normal cell division and for the maintenance of normal septation. The protein is Probable GTP-binding protein EngB of Shewanella baltica (strain OS223).